The following is a 480-amino-acid chain: Cytochrome b-c1 complex subunit 1, mitochondrial (480 aa).

The transit peptide at 1–34 directs the protein to the mitochondrion; that stretch reads MAASAVCRAACSGTQALLRTCRSPALLRLPALRG. N6-acetyllysine is present on residues Lys-111 and Lys-138. Lys-163 bears the N6-acetyllysine; alternate mark. Residue Lys-163 is modified to N6-succinyllysine; alternate. Ser-212 is modified (phosphoserine). Thr-214 carries the phosphothreonine modification.

Belongs to the peptidase M16 family. UQCRC1/QCR1 subfamily. In terms of assembly, component of the ubiquinol-cytochrome c oxidoreductase (cytochrome b-c1 complex, complex III, CIII), a multisubunit enzyme composed of 11 subunits. The complex is composed of 3 respiratory subunits cytochrome b, cytochrome c1 and Rieske protein UQCRFS1, 2 core protein subunits UQCRC1/QCR1 and UQCRC2/QCR2, and 6 low-molecular weight protein subunits UQCRH/QCR6, UQCRB/QCR7, UQCRQ/QCR8, UQCR10/QCR9, UQCR11/QCR10 and subunit 9, the cleavage product of Rieske protein UQCRFS1. The complex exists as an obligatory dimer and forms supercomplexes (SCs) in the inner mitochondrial membrane with NADH-ubiquinone oxidoreductase (complex I, CI) and cytochrome c oxidase (complex IV, CIV), resulting in different assemblies (supercomplex SCI(1)III(2)IV(1) and megacomplex MCI(2)III(2)IV(2)). Interacts with UQCC6. Interacts with STMP1.

Its subcellular location is the mitochondrion inner membrane. Its function is as follows. Component of the ubiquinol-cytochrome c oxidoreductase, a multisubunit transmembrane complex that is part of the mitochondrial electron transport chain which drives oxidative phosphorylation. The respiratory chain contains 3 multisubunit complexes succinate dehydrogenase (complex II, CII), ubiquinol-cytochrome c oxidoreductase (cytochrome b-c1 complex, complex III, CIII) and cytochrome c oxidase (complex IV, CIV), that cooperate to transfer electrons derived from NADH and succinate to molecular oxygen, creating an electrochemical gradient over the inner membrane that drives transmembrane transport and the ATP synthase. The cytochrome b-c1 complex catalyzes electron transfer from ubiquinol to cytochrome c, linking this redox reaction to translocation of protons across the mitochondrial inner membrane, with protons being carried across the membrane as hydrogens on the quinol. In the process called Q cycle, 2 protons are consumed from the matrix, 4 protons are released into the intermembrane space and 2 electrons are passed to cytochrome c. The 2 core subunits UQCRC1/QCR1 and UQCRC2/QCR2 are homologous to the 2 mitochondrial-processing peptidase (MPP) subunits beta-MPP and alpha-MPP respectively, and they seem to have preserved their MPP processing properties. May be involved in the in situ processing of UQCRFS1 into the mature Rieske protein and its mitochondrial targeting sequence (MTS)/subunit 9 when incorporated into complex III. Seems to play an important role in the maintenance of proper mitochondrial function in nigral dopaminergic neurons. The protein is Cytochrome b-c1 complex subunit 1, mitochondrial (Uqcrc1) of Rattus norvegicus (Rat).